The primary structure comprises 372 residues: 4-hydroxy-3-methylbut-2-en-1-yl diphosphate synthase (flavodoxin) (372 aa).

Positions 270, 273, 305, and 312 each coordinate [4Fe-4S] cluster.

This sequence belongs to the IspG family. Requires [4Fe-4S] cluster as cofactor.

It catalyses the reaction (2E)-4-hydroxy-3-methylbut-2-enyl diphosphate + oxidized [flavodoxin] + H2O + 2 H(+) = 2-C-methyl-D-erythritol 2,4-cyclic diphosphate + reduced [flavodoxin]. Its pathway is isoprenoid biosynthesis; isopentenyl diphosphate biosynthesis via DXP pathway; isopentenyl diphosphate from 1-deoxy-D-xylulose 5-phosphate: step 5/6. Functionally, converts 2C-methyl-D-erythritol 2,4-cyclodiphosphate (ME-2,4cPP) into 1-hydroxy-2-methyl-2-(E)-butenyl 4-diphosphate. In Shigella dysenteriae serotype 1 (strain Sd197), this protein is 4-hydroxy-3-methylbut-2-en-1-yl diphosphate synthase (flavodoxin).